A 368-amino-acid polypeptide reads, in one-letter code: MASVKLPWDLEEEILSRLPPRSLVRFRTVCKHWNGLFSDKRFVKKHLVRARPQFIFLTESKKMYSIEIDLGGTIEVREVPYDFHCQPMKKNFTTIMACDGLLFRDFWKQGVAVWNPWLRQVGWIEYEDKGFRFCGVGYDSCKPDKCYKILGYFNCTRRLSDSLQEGYYQAAIYECASQAFKFIDTPNPFNLWPNKDPLSVNGNLYWLAHNHPETLEYFIETFDFSMEIFKPFCLLPCRKDFGSNELVLAVFKEDRFSLLKQCFETTKIEIWVTKMKIDREEEVVWIKFMTLPTTNLPNLDDTYCCSSYFIFDKTIIMCCGDYKTGATCIYMVRGDMFKKIQINSGIFQFSYCVYLPNLISVPFESHQV.

Residues 1-46 (MASVKLPWDLEEEILSRLPPRSLVRFRTVCKHWNGLFSDKRFVKKH) enclose the F-box domain.

The polypeptide is F-box protein At3g17710 (Arabidopsis thaliana (Mouse-ear cress)).